The following is a 475-amino-acid chain: 3-isopropylmalate dehydratase large subunit (475 aa).

3 residues coordinate [4Fe-4S] cluster: C347, C407, and C410. The interval 418-442 (LAPGERSASTSNRNFEGRQGKGGRT) is disordered.

The protein belongs to the aconitase/IPM isomerase family. LeuC type 1 subfamily. Heterodimer of LeuC and LeuD. Requires [4Fe-4S] cluster as cofactor.

It catalyses the reaction (2R,3S)-3-isopropylmalate = (2S)-2-isopropylmalate. The protein operates within amino-acid biosynthesis; L-leucine biosynthesis; L-leucine from 3-methyl-2-oxobutanoate: step 2/4. Its function is as follows. Catalyzes the isomerization between 2-isopropylmalate and 3-isopropylmalate, via the formation of 2-isopropylmaleate. In Streptomyces griseus subsp. griseus (strain JCM 4626 / CBS 651.72 / NBRC 13350 / KCC S-0626 / ISP 5235), this protein is 3-isopropylmalate dehydratase large subunit.